A 545-amino-acid chain; its full sequence is CTP synthase (545 aa).

The amidoligase domain stretch occupies residues 1–266 (MTTNYIFVTG…DDYICKRFGL (266 aa)). Ser14 provides a ligand contact to CTP. Ser14 serves as a coordination point for UTP. Residues 15–20 (SLGKGI) and Asp72 each bind ATP. Asp72 and Glu140 together coordinate Mg(2+). Residues 147–149 (DIE), 187–192 (KTKPTQ), and Lys223 each bind CTP. UTP contacts are provided by residues 187 to 192 (KTKPTQ) and Lys223. Residue 239–241 (KDV) coordinates ATP. The Glutamine amidotransferase type-1 domain maps to 291-542 (TIGMVGKYIA…VKAAGEYQKR (252 aa)). Gly352 is a binding site for L-glutamine. Cys379 (nucleophile; for glutamine hydrolysis) is an active-site residue. L-glutamine contacts are provided by residues 380–383 (LGMQ), Glu403, and Arg470. Residues His515 and Glu517 contribute to the active site.

This sequence belongs to the CTP synthase family. In terms of assembly, homotetramer.

It catalyses the reaction UTP + L-glutamine + ATP + H2O = CTP + L-glutamate + ADP + phosphate + 2 H(+). The catalysed reaction is L-glutamine + H2O = L-glutamate + NH4(+). The enzyme catalyses UTP + NH4(+) + ATP = CTP + ADP + phosphate + 2 H(+). It functions in the pathway pyrimidine metabolism; CTP biosynthesis via de novo pathway; CTP from UDP: step 2/2. With respect to regulation, allosterically activated by GTP, when glutamine is the substrate; GTP has no effect on the reaction when ammonia is the substrate. The allosteric effector GTP functions by stabilizing the protein conformation that binds the tetrahedral intermediate(s) formed during glutamine hydrolysis. Inhibited by the product CTP, via allosteric rather than competitive inhibition. Functionally, catalyzes the ATP-dependent amination of UTP to CTP with either L-glutamine or ammonia as the source of nitrogen. Regulates intracellular CTP levels through interactions with the four ribonucleotide triphosphates. The chain is CTP synthase from Sodalis glossinidius (strain morsitans).